We begin with the raw amino-acid sequence, 68 residues long: Large ribosomal subunit protein bL35 (68 aa).

The protein belongs to the bacterial ribosomal protein bL35 family.

The sequence is that of Large ribosomal subunit protein bL35 from Rickettsia bellii (strain RML369-C).